A 238-amino-acid chain; its full sequence is Deoxyribose-phosphate aldolase (238 aa).

Asp-102 serves as the catalytic Proton donor/acceptor. Lys-164 functions as the Schiff-base intermediate with acetaldehyde in the catalytic mechanism. Lys-193 (proton donor/acceptor) is an active-site residue.

It belongs to the DeoC/FbaB aldolase family. DeoC type 1 subfamily.

It localises to the cytoplasm. It catalyses the reaction 2-deoxy-D-ribose 5-phosphate = D-glyceraldehyde 3-phosphate + acetaldehyde. Its pathway is carbohydrate degradation; 2-deoxy-D-ribose 1-phosphate degradation; D-glyceraldehyde 3-phosphate and acetaldehyde from 2-deoxy-alpha-D-ribose 1-phosphate: step 2/2. Catalyzes a reversible aldol reaction between acetaldehyde and D-glyceraldehyde 3-phosphate to generate 2-deoxy-D-ribose 5-phosphate. The chain is Deoxyribose-phosphate aldolase from Rhodospirillum rubrum (strain ATCC 11170 / ATH 1.1.1 / DSM 467 / LMG 4362 / NCIMB 8255 / S1).